Consider the following 126-residue polypeptide: Aspartate 1-decarboxylase (126 aa).

Ser-25 (schiff-base intermediate with substrate; via pyruvic acid) is an active-site residue. Residue Ser-25 is modified to Pyruvic acid (Ser). Substrate is bound at residue Thr-57. Residue Tyr-58 is the Proton donor of the active site. 73 to 75 contributes to the substrate binding site; sequence GAA.

The protein belongs to the PanD family. In terms of assembly, heterooctamer of four alpha and four beta subunits. It depends on pyruvate as a cofactor. Post-translationally, is synthesized initially as an inactive proenzyme, which is activated by self-cleavage at a specific serine bond to produce a beta-subunit with a hydroxyl group at its C-terminus and an alpha-subunit with a pyruvoyl group at its N-terminus.

The protein resides in the cytoplasm. It catalyses the reaction L-aspartate + H(+) = beta-alanine + CO2. The protein operates within cofactor biosynthesis; (R)-pantothenate biosynthesis; beta-alanine from L-aspartate: step 1/1. In terms of biological role, catalyzes the pyruvoyl-dependent decarboxylation of aspartate to produce beta-alanine. This chain is Aspartate 1-decarboxylase, found in Acetivibrio thermocellus (strain ATCC 27405 / DSM 1237 / JCM 9322 / NBRC 103400 / NCIMB 10682 / NRRL B-4536 / VPI 7372) (Clostridium thermocellum).